Here is a 536-residue protein sequence, read N- to C-terminus: Methyl-accepting chemotaxis aspartate transducer (536 aa).

Over 1–10 (MFNRIRISTS) the chain is Cytoplasmic. The helical transmembrane segment at 11-31 (LFLLLISFCIMQLISTGLSYV) threads the bilayer. The Periplasmic portion of the chain corresponds to 32 to 188 (ALRADNHNLE…ASSQQAYGWS (157 aa)). Positions 64 to 73 (RNTLNRAGTR) are the 3 Arg may form a positively charged pocket, which binds the alpha-carboxyl group of the attractant AA. Residues 189-209 (IWLVAGAVLMLLVVTLSAMWW) form a helical membrane-spanning segment. Topologically, residues 210–536 (LRTMLVQPLN…VKETLDCQTA (327 aa)) are cytoplasmic. The HAMP domain occupies 212–264 (TMLVQPLNIIRGHFERIASGDLSAPIEVYGRNEISQLFASLQRMQQSLIGTVG). The 230-residue stretch at 269-498 (GAESILIGLQ…ESASAAAALE (230 aa)) folds into the Methyl-accepting transducer domain. The residue at position 293 (Q293) is a Glutamate methyl ester (Gln). E300 is subject to Glutamate methyl ester (Glu). Glutamate methyl ester (Gln) is present on Q307. Glutamate methyl ester (Glu) occurs at positions 489 and 498.

It belongs to the methyl-accepting chemotaxis (MCP) protein family.

It localises to the cell inner membrane. Functionally, this protein responds to changes in Asp concentration in the environment, transduces a signal from the outside to the inside of the cell, and facilitates sensory adaptation through various levels of methylation. Chemotactic-signal transducers respond to changes in the concentration of attractants and repellents in the environment, transduce a signal from the outside to the inside of the cell, and facilitate sensory adaptation through the variation of the level of methylation. Attractants increase the level of methylation while repellents decrease the level of methylation, the methyl groups are added by the methyltransferase CheR and removed by the methylesterase CheB. The chain is Methyl-accepting chemotaxis aspartate transducer (tas) from Klebsiella aerogenes (strain ATCC 13048 / DSM 30053 / CCUG 1429 / JCM 1235 / KCTC 2190 / NBRC 13534 / NCIMB 10102 / NCTC 10006 / CDC 819-56) (Enterobacter aerogenes).